Reading from the N-terminus, the 1017-residue chain is Voltage-gated delayed rectifier potassium channel KCNH4 (1017 aa).

The Cytoplasmic portion of the chain corresponds to 1-228 (MPVMKGLLAP…LLHYSVSKAI (228 aa)). The PAS domain occupies 14–90 (FLDTIATRFD…QRLHKALEGH (77 aa)). The PAC domain maps to 93 to 145 (HRAEICFYRKDGSAFWCLLDMMPIKNEMGEVVLFLFSFKDITQSGSPGLGPQG). The disordered stretch occupies residues 138–157 (SPGLGPQGGRGDSNHENSLG). Over residues 139–148 (PGLGPQGGRG) the composition is skewed to gly residues. A helical membrane pass occupies residues 229–249 (WDGLILLATFYVAVTVPYNVC). At 250–259 (FSGDDDTPIT) the chain is on the extracellular side. Residues 260–280 (SRHTLVSDIAVEMLFILDIIL) form a helical membrane-spanning segment. The Cytoplasmic segment spans residues 281–302 (NFRTTYVSQSGQVISAPRSIGL). Residues 303 to 323 (HYLATWFFIDLIAALPFDLLY) form a helical membrane-spanning segment. Over 324-332 (IFNITVTSL) the chain is Extracellular. N326 carries N-linked (GlcNAc...) asparagine glycosylation. A helical; Voltage-sensor membrane pass occupies residues 333 to 353 (VHLLKTVRLLRLLRLLQKLER). At 354-361 (YSQCSAVV) the chain is on the cytoplasmic side. Residues 362 to 382 (LTLLMSVFALLAHWMACIWYV) form a helical membrane-spanning segment. Topologically, residues 383–427 (IGRREMEANDPLLWDIGWLHELGKRLEVPYVNGSVGGPSRRSAYI) are extracellular. N-linked (GlcNAc...) asparagine glycosylation is present at N414. An intramembrane region (pore-forming) is located at residues 428 to 448 (AALYFTLSSLTSVGFGNVCAN). A Selectivity filter motif is present at residues 439-444 (SVGFGN). The Extracellular portion of the chain corresponds to 449–482 (TDAEKIFSICTMLIGALMHAVVFGNVTAIIQRMY). N473 carries an N-linked (GlcNAc...) asparagine glycan. Residues 483 to 503 (SRRSLYHSRMKDLKDFIRVHR) form a helical membrane-spanning segment. Topologically, residues 504-1017 (LPRPLKQRML…SFQSRSDTFH (514 aa)) are cytoplasmic. Residues 556–620 (LFGAASRGCL…AILGKGDLIG (65 aa)) are cNMP-binding domain. A compositionally biased stretch (polar residues) spans 691-724 (GSDTSGLSRFSRSPRLSQPRSESLGSSSDKTLPS). Disordered regions lie at residues 691 to 749 (GSDT…LPNL), 772 to 803 (LVSSPSLSPSLSPALAGQGHSASPHGPPRCSA), 821 to 875 (PDLS…EAEE), and 971 to 1017 (LLDL…DTFH). A compositionally biased stretch (low complexity) spans 772 to 787 (LVSSPSLSPSLSPALA). Residues 978-1002 (ILPPYPSEPDPLGPSPVPEASPPTP) are compositionally biased toward pro residues. Over residues 1008–1017 (SFQSRSDTFH) the composition is skewed to polar residues.

Belongs to the potassium channel family. H (Eag) (TC 1.A.1.20) subfamily. Kv12.3/KCNH4 sub-subfamily. In terms of assembly, the potassium channel is probably composed of a homo- or heterotetrameric complex of pore-forming alpha subunits that can associate with modulating beta subunits. Detected only in brain, in particular in the telencephalon. Detected in putamen and caudate nucleus, and at lower levels in cerebral cortex, occipital and hippocampus.

It localises to the membrane. It carries out the reaction K(+)(in) = K(+)(out). Pore-forming (alpha) subunit of a voltage-gated delayed rectifier. Activates at more negative voltages, exhibits fast prepulse-independent activation kinetics and deactivates much more slowly, but shows no inactivation. This Homo sapiens (Human) protein is Voltage-gated delayed rectifier potassium channel KCNH4.